The primary structure comprises 128 residues: MKILGIGVDIVENIRIHKSLKNVNFIKRVFSSSEILLAKKITNKKSFYSKRFAAKEAFSKAIGTGFRENLNFKDITVINDKLGKPSFVVTDKIKKIVKKRFKISSFNFFLSISDEKKYSVAYVILQKK.

Positions 9 and 56 each coordinate Mg(2+).

The protein belongs to the P-Pant transferase superfamily. AcpS family. Mg(2+) serves as cofactor.

The protein resides in the cytoplasm. The enzyme catalyses apo-[ACP] + CoA = holo-[ACP] + adenosine 3',5'-bisphosphate + H(+). In terms of biological role, transfers the 4'-phosphopantetheine moiety from coenzyme A to a Ser of acyl-carrier-protein. This chain is Holo-[acyl-carrier-protein] synthase, found in Pelagibacter ubique (strain HTCC1062).